We begin with the raw amino-acid sequence, 435 residues long: Islet cell autoantigen 1-like protein (435 aa).

Positions 44–247 constitute an AH domain; it reads ASDAELDAKL…TAQMMSQIQE (204 aa). The disordered stretch occupies residues 391-435; it reads WASQEGSEHSDTLPVPSQHPKKLKYLGPLSNPDAIGHSDDELLNA. Positions 426–435 are enriched in basic and acidic residues; that stretch reads GHSDDELLNA.

This chain is Islet cell autoantigen 1-like protein (Ica1l), found in Rattus norvegicus (Rat).